Consider the following 1410-residue polypeptide: SNF2 domain-containing protein CLASSY 3 (1410 aa).

A compositionally biased stretch (basic residues) spans 1 to 12; it reads MECIGKRVKSRS. 6 disordered regions span residues 1-74, 87-108, 209-330, 344-376, 428-593, and 632-654; these read MECI…SVPN, DLNVEKKSGPSSSRLTDGSEQN, GEIE…PIKR, RSGSSLTKPRERDNKIQKLNHREEEKKERQREV, NVSK…LKDK, and EDEADELVSSAEDQSQEQAREDH. The Nuclear localization signal 1 signature appears at 22 to 29; that stretch reads RKKMETVA. Positions 95–108 are enriched in polar residues; the sequence is GPSSSRLTDGSEQN. A compositionally biased stretch (acidic residues) spans 245-266; it reads SDGEDSSSETDEEEEENQDSED. Residues 248 to 278 are a coiled coil; it reads EDSSSETDEEEEENQDSEDNNTKDNVTVESL. Over residues 276-301 the composition is skewed to low complexity; sequence ESLSSEDPSSSSSSSSSSSSSSSSSS. Basic and acidic residues predominate over residues 306–323; that stretch reads SYVKEVVGDNRDDDDLRK. The Nuclear localization signal 2 motif lies at 328 to 335; sequence IKRVSLVE. Positions 351 to 376 are enriched in basic and acidic residues; it reads KPRERDNKIQKLNHREEEKKERQREV. Positions 356–377 form a coiled coil; the sequence is DNKIQKLNHREEEKKERQREVV. The segment covering 428–446 has biased composition (polar residues); it reads NVSKYEDSVSINSGKTTGA. 2 stretches are compositionally biased toward basic and acidic residues: residues 450–463 and 488–504; these read PEVENPETGKELNT and EPSRPEIYSSEKAKEVQ. Residues 576–587 show a composition bias toward low complexity; it reads SSISSGDGYESD. The 211-residue stretch at 850–1060 folds into the Helicase ATP-binding domain; it reads FENSDETGGC…CNVLGLARPK (211 aa). Residue 863–870 coordinates ATP; it reads HAPGTGKT. The DEAH box motif lies at 1011–1014; the sequence is DEAH. A Nuclear localization signal 3 motif is present at residues 1132–1139; that stretch reads QRRVLESI. The Helicase C-terminal domain occupies 1206-1359; sequence EFVELCEVIK…ELVFACSSRH (154 aa).

The protein belongs to the SNF2/RAD54 helicase family. In terms of assembly, interacts with NRPD1.

It localises to the nucleus. Its function is as follows. Probable chromatin remodeling factor. This is SNF2 domain-containing protein CLASSY 3 (CLSY3) from Arabidopsis thaliana (Mouse-ear cress).